The following is a 480-amino-acid chain: Aspartyl/glutamyl-tRNA(Asn/Gln) amidotransferase subunit B (480 aa).

It belongs to the GatB/GatE family. GatB subfamily. In terms of assembly, heterotrimer of A, B and C subunits.

The catalysed reaction is L-glutamyl-tRNA(Gln) + L-glutamine + ATP + H2O = L-glutaminyl-tRNA(Gln) + L-glutamate + ADP + phosphate + H(+). The enzyme catalyses L-aspartyl-tRNA(Asn) + L-glutamine + ATP + H2O = L-asparaginyl-tRNA(Asn) + L-glutamate + ADP + phosphate + 2 H(+). Its function is as follows. Allows the formation of correctly charged Asn-tRNA(Asn) or Gln-tRNA(Gln) through the transamidation of misacylated Asp-tRNA(Asn) or Glu-tRNA(Gln) in organisms which lack either or both of asparaginyl-tRNA or glutaminyl-tRNA synthetases. The reaction takes place in the presence of glutamine and ATP through an activated phospho-Asp-tRNA(Asn) or phospho-Glu-tRNA(Gln). The protein is Aspartyl/glutamyl-tRNA(Asn/Gln) amidotransferase subunit B of Streptococcus pneumoniae (strain ATCC 700669 / Spain 23F-1).